Consider the following 367-residue polypeptide: Protein-glutamate methylesterase/protein-glutamine glutaminase 2 (367 aa).

A Response regulatory domain is found at 15–132 (RALIVDDSAL…SQSMHEMAEE (118 aa)). D66 carries the 4-aspartylphosphate modification. A CheB-type methylesterase domain is found at 172–367 (KTSVRNVLAI…MADEIVKIVR (196 aa)). Active-site residues include S184, H211, and D311.

This sequence belongs to the CheB family. In terms of processing, phosphorylated by CheA. Phosphorylation of the N-terminal regulatory domain activates the methylesterase activity.

Its subcellular location is the cytoplasm. It catalyses the reaction [protein]-L-glutamate 5-O-methyl ester + H2O = L-glutamyl-[protein] + methanol + H(+). The enzyme catalyses L-glutaminyl-[protein] + H2O = L-glutamyl-[protein] + NH4(+). Functionally, involved in chemotaxis. Part of a chemotaxis signal transduction system that modulates chemotaxis in response to various stimuli. Catalyzes the demethylation of specific methylglutamate residues introduced into the chemoreceptors (methyl-accepting chemotaxis proteins or MCP) by CheR. Also mediates the irreversible deamidation of specific glutamine residues to glutamic acid. The chain is Protein-glutamate methylesterase/protein-glutamine glutaminase 2 from Methanosarcina mazei (strain ATCC BAA-159 / DSM 3647 / Goe1 / Go1 / JCM 11833 / OCM 88) (Methanosarcina frisia).